The chain runs to 32 residues: Cytochrome b6-f complex subunit 8 (32 aa).

Residues 6-26 (IVSLAWAALMVVFTFSLSLVV) form a helical membrane-spanning segment.

The protein belongs to the PetN family. In terms of assembly, the 4 large subunits of the cytochrome b6-f complex are cytochrome b6, subunit IV (17 kDa polypeptide, PetD), cytochrome f and the Rieske protein, while the 4 small subunits are PetG, PetL, PetM and PetN. The complex functions as a dimer.

The protein resides in the plastid. It is found in the chloroplast thylakoid membrane. In terms of biological role, component of the cytochrome b6-f complex, which mediates electron transfer between photosystem II (PSII) and photosystem I (PSI), cyclic electron flow around PSI, and state transitions. The chain is Cytochrome b6-f complex subunit 8 from Illicium oligandrum (Star anise).